A 601-amino-acid chain; its full sequence is Trehalose synthase/amylase TreS (601 aa).

Residues 1–21 (MNEAEHSVEHPPVQGSHVEGG) form a disordered region. Position 98 (Asp-98) interacts with substrate. Asn-140 lines the Ca(2+) pocket. Residues His-141 and Gln-206 each coordinate substrate. Asp-208 is a binding site for Ca(2+). Arg-236 is a substrate binding site. Asp-238 functions as the Nucleophile in the catalytic mechanism. Ca(2+)-binding residues include Tyr-242, Leu-243, and Glu-245. The active-site Proton donor is Glu-280. Residues His-349 and Asp-350 each contribute to the substrate site.

It belongs to the glycosyl hydrolase 13 family. TreS subfamily. Homohexamer.

It catalyses the reaction D-maltose = alpha,alpha-trehalose. The enzyme catalyses Endohydrolysis of (1-&gt;4)-alpha-D-glucosidic linkages in polysaccharides containing three or more (1-&gt;4)-alpha-linked D-glucose units.. It participates in glycan biosynthesis; glycogen biosynthesis. The protein operates within capsule biogenesis; capsule polysaccharide biosynthesis. In terms of biological role, catalyzes the reversible interconversion of maltose and trehalose by transglucosylation. Also displays amylase activity, catalyzing the endohydrolysis of (1-&gt;4)-alpha-D-glucosidic linkages in glycogen and maltooligosaccharides such as maltoheptaose, to produce maltose which then can be converted to trehalose. TreS plays a key role in the utilization of trehalose for the production of glycogen and alpha-glucan via the TreS-Pep2 branch involved in the biosynthesis of maltose-1-phosphate (M1P). Might also function as a sensor and/or regulator of trehalose levels within the cell. Thus, when trehalose levels in the cell become dangerously low, TreS could expedite the conversion of glycogen to maltose via its amylase activity and then convert the maltose to trehalose; but this enzyme also could expedite or promote the conversion of trehalose to glycogen when cytoplasmic trehalose levels become too high. The chain is Trehalose synthase/amylase TreS from Mycobacterium tuberculosis (strain CDC 1551 / Oshkosh).